Reading from the N-terminus, the 308-residue chain is Aldo-keto reductase AKR2E4 (308 aa).

NADP(+)-binding positions include 22–29 (GTGRGTAK) and aspartate 53. The active-site Proton donor is the tyrosine 58. Residues 158–159 (SN), arginine 215, and 259–269 (KSTNKQRIAQN) each bind NADP(+).

Belongs to the short-chain dehydrogenases/reductases (SDR) family. In terms of tissue distribution, detected in hemolymph (at protein level). Detected in larval ovary.

With respect to regulation, subject to substrate inhibition by high levels of 3-dehydroecdysone. Its function is as follows. NADP-dependent oxidoreductase with high 3-dehydroecdysone reductase activity. May play a role in the regulation of molting. Has lower activity with phenylglyoxal and isatin (in vitro). Has no activity with NADH as cosubstrate. Has no activity with nitrobenzaldehyde and 3-hydroxybenzaldehyde. This Bombyx mori (Silk moth) protein is Aldo-keto reductase AKR2E4 (akr2e).